Consider the following 400-residue polypeptide: Ubiquitin-like modifier-activating enzyme 5 (400 aa).

Residues Gly76, Asp97, Lys120, Asn143, and Asn177 each coordinate ATP. Zn(2+) is bound by residues Cys219 and Cys222. The active-site Glycyl thioester intermediate is Cys243. Residues Cys296 and Cys301 each coordinate Zn(2+).

It belongs to the ubiquitin-activating E1 family. UBA5 subfamily.

Its function is as follows. E1-like enzyme which activates UFM1. This chain is Ubiquitin-like modifier-activating enzyme 5, found in Drosophila virilis (Fruit fly).